A 437-amino-acid polypeptide reads, in one-letter code: 3-phosphoshikimate 1-carboxyvinyltransferase (437 aa).

3-phosphoshikimate contacts are provided by lysine 22, serine 23, and arginine 27. Lysine 22 is a binding site for phosphoenolpyruvate. The phosphoenolpyruvate site is built by glycine 94 and arginine 122. Serine 167, glutamine 169, aspartate 314, and lysine 341 together coordinate 3-phosphoshikimate. A phosphoenolpyruvate-binding site is contributed by glutamine 169. Aspartate 314 (proton acceptor) is an active-site residue. Arginine 345 and arginine 389 together coordinate phosphoenolpyruvate.

Belongs to the EPSP synthase family. As to quaternary structure, monomer.

Its subcellular location is the cytoplasm. It catalyses the reaction 3-phosphoshikimate + phosphoenolpyruvate = 5-O-(1-carboxyvinyl)-3-phosphoshikimate + phosphate. The protein operates within metabolic intermediate biosynthesis; chorismate biosynthesis; chorismate from D-erythrose 4-phosphate and phosphoenolpyruvate: step 6/7. Its function is as follows. Catalyzes the transfer of the enolpyruvyl moiety of phosphoenolpyruvate (PEP) to the 5-hydroxyl of shikimate-3-phosphate (S3P) to produce enolpyruvyl shikimate-3-phosphate and inorganic phosphate. The sequence is that of 3-phosphoshikimate 1-carboxyvinyltransferase from Oenococcus oeni (strain ATCC BAA-331 / PSU-1).